A 399-amino-acid chain; its full sequence is Elongation factor Tu (399 aa).

A tr-type G domain is found at 10-209 (KPHVNIGTIG…AVDSYIPTPV (200 aa)). The tract at residues 19 to 26 (GHVDHGKT) is G1. 19–26 (GHVDHGKT) is a binding site for GTP. Thr-26 lines the Mg(2+) pocket. Positions 60–64 (GITIA) are G2. The segment at 81–84 (DCPG) is G3. Residues 81 to 85 (DCPGH) and 136 to 139 (NKAD) contribute to the GTP site. Residues 136 to 139 (NKAD) are G4. The segment at 174 to 176 (SAL) is G5.

The protein belongs to the TRAFAC class translation factor GTPase superfamily. Classic translation factor GTPase family. EF-Tu/EF-1A subfamily. As to quaternary structure, monomer.

It localises to the cytoplasm. The enzyme catalyses GTP + H2O = GDP + phosphate + H(+). In terms of biological role, GTP hydrolase that promotes the GTP-dependent binding of aminoacyl-tRNA to the A-site of ribosomes during protein biosynthesis. This Campylobacter concisus (strain 13826) protein is Elongation factor Tu.